Consider the following 344-residue polypeptide: MTQITLLTPDDWHLHFRDGDMLQETVPATARLFQRAIVMPNLLPPVTDAKLASAYRERILAARPEGSSFEPLMTIFLTNDTSKQDIIDAKAAGVVAAKLYPAGATTNSDAAVKGLDALFPIFETMAEIGMLLLVHGEVTESHIDIFDREALFIERNLSRIVDAFPQLKVVFEHITTKEAAEFVTSASDNVAATITPQHLLLNRNDLLVGGVRPHNFCLPVLKRNIHQEALRAAVATGSSKFFLGTDSAPHEKHRKESACGCAGCYSAWSALELYAQVFDDLGVIEKLEGFASTHGPDFYGLPRNTGTVTLVKESWTVPSEIILPNGNPIVPFFAGEEVNWKVKS.

Residues H13 and H15 each contribute to the Zn(2+) site. Residues H15–R17 and N41 contribute to the substrate site. 3 residues coordinate Zn(2+): K98, H135, and H173. An N6-carboxylysine modification is found at K98. Substrate is bound at residue H135. Residue L218 coordinates substrate. D246 contributes to the Zn(2+) binding site. D246 is a catalytic residue. The substrate site is built by H250 and A262.

Belongs to the metallo-dependent hydrolases superfamily. DHOase family. Class II DHOase subfamily. In terms of assembly, homodimer. It depends on Zn(2+) as a cofactor.

It carries out the reaction (S)-dihydroorotate + H2O = N-carbamoyl-L-aspartate + H(+). It functions in the pathway pyrimidine metabolism; UMP biosynthesis via de novo pathway; (S)-dihydroorotate from bicarbonate: step 3/3. In terms of biological role, catalyzes the reversible cyclization of carbamoyl aspartate to dihydroorotate. The chain is Dihydroorotase from Shewanella woodyi (strain ATCC 51908 / MS32).